The chain runs to 107 residues: Acidic phospholipase A2 braziliase-I (107 aa).

7 cysteine pairs are disulfide-bonded: Cys26/Cys100, Cys28/Cys44, Cys43/Cys86, Cys49/Cys107, Cys50/Cys79, Cys57/Cys72, and Cys66/Cys77. Ca(2+) contacts are provided by Tyr27, Gly29, and Gly31. The active site involves His47. Position 48 (Asp48) interacts with Ca(2+). Asp80 is a catalytic residue.

In terms of assembly, monomer. The cofactor is Ca(2+). As to expression, expressed by the venom gland.

The protein localises to the secreted. It carries out the reaction a 1,2-diacyl-sn-glycero-3-phosphocholine + H2O = a 1-acyl-sn-glycero-3-phosphocholine + a fatty acid + H(+). Snake venom phospholipase A2 (PLA2) that induces significant edematogenic activity. Shows mild cytotoxicity on Trypanosoma cruzi and Leishmania infantum. Also inhibits ADP- and collagen-induced platelet aggregation. Does not show myotoxic activity. The sequence is that of Acidic phospholipase A2 braziliase-I from Bothrops brazili (Brazil's lancehead).